The sequence spans 280 residues: Hydroxyethylthiazole kinase (280 aa).

Residue methionine 50 participates in substrate binding. Lysine 125 and threonine 178 together coordinate ATP. Residue glycine 205 participates in substrate binding.

Belongs to the Thz kinase family. It depends on Mg(2+) as a cofactor.

It catalyses the reaction 5-(2-hydroxyethyl)-4-methylthiazole + ATP = 4-methyl-5-(2-phosphooxyethyl)-thiazole + ADP + H(+). Its pathway is cofactor biosynthesis; thiamine diphosphate biosynthesis; 4-methyl-5-(2-phosphoethyl)-thiazole from 5-(2-hydroxyethyl)-4-methylthiazole: step 1/1. Functionally, catalyzes the phosphorylation of the hydroxyl group of 4-methyl-5-beta-hydroxyethylthiazole (THZ). This chain is Hydroxyethylthiazole kinase, found in Lacticaseibacillus paracasei (strain ATCC 334 / BCRC 17002 / CCUG 31169 / CIP 107868 / KCTC 3260 / NRRL B-441) (Lactobacillus paracasei).